We begin with the raw amino-acid sequence, 106 residues long: Iron-sulfur cluster assembly protein CyaY (106 aa).

It belongs to the frataxin family.

Involved in iron-sulfur (Fe-S) cluster assembly. May act as a regulator of Fe-S biogenesis. In Dickeya chrysanthemi (Pectobacterium chrysanthemi), this protein is Iron-sulfur cluster assembly protein CyaY.